Consider the following 353-residue polypeptide: Heterogeneous nuclear ribonucleoprotein D0 (353 aa).

Residues 1–89 are disordered; it reads MSEEQFGGDG…SSPRHTEAAT (89 aa). N-acetylserine is present on serine 2. Residues 11-42 show a composition bias toward low complexity; sequence AAAAATAAVGGSAGEQEGAMVAAAQGAAAAAG. Positions 43–56 are enriched in gly residues; sequence SGSGGGSAPGGTEG. A compositionally biased stretch (basic and acidic residues) spans 62–71; it reads EGAKIDASKN. The residue at position 69 (serine 69) is a Phosphoserine. A Glycyl lysine isopeptide (Lys-Gly) (interchain with G-Cter in SUMO2) cross-link involves residue lysine 70. Phosphoserine occurs at positions 78, 80, and 81. The residue at position 89 (threonine 89) is a Phosphothreonine. 2 consecutive RRM domains span residues 95–177 and 180–259; these read WKMF…KTKE and KKIF…MSKE. Lysine 117 is subject to N6-methyllysine. At threonine 125 the chain carries Phosphothreonine. Residue lysine 127 forms a Glycyl lysine isopeptide (Lys-Gly) (interchain with G-Cter in SUMO2) linkage. Lysine 163 bears the N6-acetyllysine mark. The residue at position 188 (serine 188) is a Phosphoserine. Position 191 is a phosphothreonine (threonine 191). Lysine 195 participates in a covalent cross-link: Glycyl lysine isopeptide (Lys-Gly) (interchain with G-Cter in SUMO2). N6-acetyllysine is present on residues lysine 241 and lysine 249. Serine 269 bears the Phosphoserine mark. An omega-N-methylarginine mark is found at arginine 270, arginine 276, arginine 278, and arginine 280. At arginine 343 the chain carries Asymmetric dimethylarginine; alternate. Residue arginine 343 is modified to Dimethylated arginine; alternate. The residue at position 343 (arginine 343) is an Omega-N-methylarginine; alternate.

As to quaternary structure, identified in a IGF2BP1-dependent mRNP granule complex containing untranslated mRNAs. Part of a complex associated with the FOS mCRD domain and consisting of PABPC1, PAIP1, CSDE1/UNR and SYNCRIP. Interacts with IGF2BP2. Interacts with GTPBP1. Interacts with EIF4G1; the interaction requires RNA. Interacts with EIF3B and RPS3. In terms of processing, methylated by PRMT1, in an insulin-dependent manner. The PRMT1-mediated methylation regulates its phosphorylation. Post-translationally, arg-343 is dimethylated, probably to asymmetric dimethylarginine.

Its subcellular location is the nucleus. The protein localises to the cytoplasm. Functionally, binds with high affinity to RNA molecules that contain AU-rich elements (AREs) found within the 3'-UTR of many proto-oncogenes and cytokine mRNAs. Also binds to double- and single-stranded DNA sequences in a specific manner and functions a transcription factor. Each of the RNA-binding domains specifically can bind solely to a single-stranded non-monotonous 5'-UUAG-3' sequence and also weaker to the single-stranded 5'-TTAGGG-3' telomeric DNA repeat. Binds RNA oligonucleotides with 5'-UUAGGG-3' repeats more tightly than the telomeric single-stranded DNA 5'-TTAGGG-3' repeats. Binding of RRM1 to DNA inhibits the formation of DNA quadruplex structure which may play a role in telomere elongation. May be involved in translationally coupled mRNA turnover. Implicated with other RNA-binding proteins in the cytoplasmic deadenylation/translational and decay interplay of the FOS mRNA mediated by the major coding-region determinant of instability (mCRD) domain. May play a role in the regulation of the rhythmic expression of circadian clock core genes. Directly binds to the 3'UTR of CRY1 mRNA and induces CRY1 rhythmic translation. May also be involved in the regulation of PER2 translation. The sequence is that of Heterogeneous nuclear ribonucleoprotein D0 (Hnrnpd) from Rattus norvegicus (Rat).